The primary structure comprises 286 residues: ATP synthase gamma chain (286 aa).

Belongs to the ATPase gamma chain family. In terms of assembly, F-type ATPases have 2 components, CF(1) - the catalytic core - and CF(0) - the membrane proton channel. CF(1) has five subunits: alpha(3), beta(3), gamma(1), delta(1), epsilon(1). CF(0) has three main subunits: a, b and c.

Its subcellular location is the cell inner membrane. Produces ATP from ADP in the presence of a proton gradient across the membrane. The gamma chain is believed to be important in regulating ATPase activity and the flow of protons through the CF(0) complex. The protein is ATP synthase gamma chain of Leptospira borgpetersenii serovar Hardjo-bovis (strain JB197).